The sequence spans 169 residues: Small ribosomal subunit protein uS5 (169 aa).

The S5 DRBM domain occupies 13–76; the sequence is LVEKLVSVRR…EKARRNMKDV (64 aa).

Belongs to the universal ribosomal protein uS5 family. Part of the 30S ribosomal subunit. Contacts proteins S4 and S8.

Its function is as follows. With S4 and S12 plays an important role in translational accuracy. In terms of biological role, located at the back of the 30S subunit body where it stabilizes the conformation of the head with respect to the body. The protein is Small ribosomal subunit protein uS5 of Hydrogenovibrio crunogenus (strain DSM 25203 / XCL-2) (Thiomicrospira crunogena).